The chain runs to 458 residues: Light-independent protochlorophyllide reductase subunit N (458 aa).

3 residues coordinate [4Fe-4S] cluster: C22, C47, and C107.

It belongs to the BchN/ChlN family. As to quaternary structure, protochlorophyllide reductase is composed of three subunits; ChlL, ChlN and ChlB. Forms a heterotetramer of two ChlB and two ChlN subunits. It depends on [4Fe-4S] cluster as a cofactor.

It localises to the plastid. The protein localises to the chloroplast. It catalyses the reaction chlorophyllide a + oxidized 2[4Fe-4S]-[ferredoxin] + 2 ADP + 2 phosphate = protochlorophyllide a + reduced 2[4Fe-4S]-[ferredoxin] + 2 ATP + 2 H2O. Its pathway is porphyrin-containing compound metabolism; chlorophyll biosynthesis (light-independent). Functionally, component of the dark-operative protochlorophyllide reductase (DPOR) that uses Mg-ATP and reduced ferredoxin to reduce ring D of protochlorophyllide (Pchlide) to form chlorophyllide a (Chlide). This reaction is light-independent. The NB-protein (ChlN-ChlB) is the catalytic component of the complex. This Chaetosphaeridium globosum (Charophycean green alga) protein is Light-independent protochlorophyllide reductase subunit N.